Consider the following 676-residue polypeptide: Protein TAPT1 homolog (676 aa).

A disordered region spans residues 1-44 (MNATLNSAGGKRQLRFRGDVTGSRVEELHHQQQEEQKQKAPLAQ). Residues 24–38 (RVEELHHQQQEEQKQ) are compositionally biased toward basic and acidic residues. A run of 6 helical transmembrane segments spans residues 128-148 (SFLY…WALV), 170-190 (EICD…MLLV), 249-269 (VLTH…LIMF), 346-366 (FCVM…IDWV), 414-434 (GFIP…AVSF), and 437-457 (LAAW…RICL). Positions 625-676 (SGDGVTSAKAKKATQRLPKRTHKRSESEPGMPSMVEKGGAAGIAGGNQTTQL) are disordered. Residues 633 to 647 (KAKKATQRLPKRTHK) are compositionally biased toward basic residues.

Belongs to the TAPT1 family.

Its subcellular location is the membrane. In Drosophila melanogaster (Fruit fly), this protein is Protein TAPT1 homolog.